Reading from the N-terminus, the 313-residue chain is Kazal-type serine protease inhibitor domain-containing protein 1 (313 aa).

Residues 1–37 (MPRVFTGLPANYAAPTLALSLLLPLLLVVWTQLPVSA) form the signal peptide. In terms of domain architecture, IGFBP N-terminal spans 56 to 136 (EGEGCAPCRP…EVPEPLCVCR (81 aa)). 7 disulfides stabilise this stretch: C60–C83, C63–C85, C68–C86, C74–C89, C97–C115, C109–C133, and C142–C175. Residues 127 to 177 (EVPEPLCVCRSQRPLCGSDGRTYAQICRLQEAARARLDANLTVVHPGPCES) enclose the Kazal-like domain. N166 and N190 each carry an N-linked (GlcNAc...) asparagine glycan. The 98-residue stretch at 179–276 (PQILSQPHNI…GQAEASATLT (98 aa)) folds into the Ig-like C2-type domain. C200 and C260 are joined by a disulfide. Residue N284 is glycosylated (N-linked (GlcNAc...) asparagine). The disordered stretch occupies residues 290–313 (QLQSRSLFPEEEEEAESEELGDYY). The span at 298 to 313 (PEEEEEAESEELGDYY) shows a compositional bias: acidic residues.

As to expression, highly expressed in the spleen. Moderately expressed in the skin, lung and urinary bladder. Weakly expressed in the brain, tongue, esophagus, stomach, large intestine, liver and bone. Expressed in osteoblastic cells during bone regeneration. Expressed in secretory osteoblasts in the tooth.

The protein localises to the secreted. Its subcellular location is the extracellular space. It is found in the extracellular matrix. Functionally, involved in the proliferation of osteoblasts during bone formation and bone regeneration. Promotes matrix assembly. This is Kazal-type serine protease inhibitor domain-containing protein 1 (Kazald1) from Mus musculus (Mouse).